We begin with the raw amino-acid sequence, 160 residues long: UPF0178 protein XC_1827 (160 aa).

Belongs to the UPF0178 family.

This Xanthomonas campestris pv. campestris (strain 8004) protein is UPF0178 protein XC_1827.